We begin with the raw amino-acid sequence, 302 residues long: MTGKIIKGIAGFYYVYVEETKEAKETATGGTLYECKAKGTFRKQKIKPLVGDTVDIAVLDEEKHIGNVERILPRKNELIRPAVSNIDMALVIFASAKPDPNFNLLDRFLCMMEYQHVPVTICFNKKDLITPQKQQELKSIYEPAGYRVMFTSTKTGEGIDEIKHVLEGRTTTVAGPSGVGKSSIINCLQDDVQMETGHISEKIERGKHTTRHSEIIPIKDGTYIMDTPGFSSMDVPGFEKEDLWTCYPEFVEYEPYCRFQGCSHINEPDCGVKEALSEGKISQVRYDNYKLLYEELKNRQKY.

The region spanning 75–233 (KNELIRPAVS…IMDTPGFSSM (159 aa)) is the CP-type G domain. GTP is bound by residues 124–127 (NKKD) and 175–183 (GPSGVGKSS). Positions 257, 262, 264, and 270 each coordinate Zn(2+).

Belongs to the TRAFAC class YlqF/YawG GTPase family. RsgA subfamily. In terms of assembly, monomer. Associates with 30S ribosomal subunit, binds 16S rRNA. Zn(2+) is required as a cofactor.

Its subcellular location is the cytoplasm. Its function is as follows. One of several proteins that assist in the late maturation steps of the functional core of the 30S ribosomal subunit. Helps release RbfA from mature subunits. May play a role in the assembly of ribosomal proteins into the subunit. Circularly permuted GTPase that catalyzes slow GTP hydrolysis, GTPase activity is stimulated by the 30S ribosomal subunit. This is Small ribosomal subunit biogenesis GTPase RsgA from Agathobacter rectalis (strain ATCC 33656 / DSM 3377 / JCM 17463 / KCTC 5835 / VPI 0990) (Eubacterium rectale).